The chain runs to 367 residues: Putative C-&gt;U-editing enzyme APOBEC-4 (367 aa).

The CMP/dCMP-type deaminase domain maps to 61–177 (PQTKHLTFYE…AWNREALRSL (117 aa)). His-93 contributes to the Zn(2+) binding site. The active-site Proton donor is Glu-95. Cys-127 and Cys-134 together coordinate Zn(2+).

It belongs to the cytidine and deoxycytidylate deaminase family. The cofactor is Zn(2+). Predominantly expressed in testis.

Putative C to U editing enzyme whose physiological substrate is not yet known. This Homo sapiens (Human) protein is Putative C-&gt;U-editing enzyme APOBEC-4 (APOBEC4).